We begin with the raw amino-acid sequence, 226 residues long: NAD(P)H-hydrate epimerase (226 aa).

In terms of domain architecture, YjeF N-terminal spans 10-215 (AIELDLDLFE…ALQRKYQLNL (206 aa)). (6S)-NADPHX is bound at residue 58-62 (NNGGD). N59 and D123 together coordinate K(+). (6S)-NADPHX-binding positions include 127–133 (GFGFKPP) and D156. S159 serves as a coordination point for K(+).

The protein belongs to the NnrE/AIBP family. The cofactor is K(+).

The catalysed reaction is (6R)-NADHX = (6S)-NADHX. It carries out the reaction (6R)-NADPHX = (6S)-NADPHX. Functionally, catalyzes the epimerization of the S- and R-forms of NAD(P)HX, a damaged form of NAD(P)H that is a result of enzymatic or heat-dependent hydration. This is a prerequisite for the S-specific NAD(P)H-hydrate dehydratase to allow the repair of both epimers of NAD(P)HX. The sequence is that of NAD(P)H-hydrate epimerase from Drosophila pseudoobscura pseudoobscura (Fruit fly).